We begin with the raw amino-acid sequence, 231 residues long: Staphylococcal superantigen-like 7 (231 aa).

The first 30 residues, 1 to 30 (MKLKTLAKATLALGLLTTGVITSEGQAVQA), serve as a signal peptide directing secretion.

This sequence belongs to the staphylococcal/streptococcal toxin family. Interacts with host IgA and complement C5; these interactions inhibits complement activation.

It is found in the secreted. Plays a role in the inhibition of host complement-mediated lysis and serum bactericidal activity by interacting with complement component C5. Affects all three pathways of complement activation and inhibits the cleavage of C5 by preventing its binding to C5 convertases. In turn, prevents C5a-mediated neutrophil migration. This Staphylococcus aureus (strain NCTC 8325 / PS 47) protein is Staphylococcal superantigen-like 7.